Reading from the N-terminus, the 336-residue chain is UDP-N-acetylglucosamine--N-acetylmuramyl-(pentapeptide) pyrophosphoryl-undecaprenol N-acetylglucosamine transferase (336 aa).

UDP-N-acetyl-alpha-D-glucosamine contacts are provided by residues 10–12 (TGG), Asn-124, Arg-157, Ser-179, and Gln-277.

This sequence belongs to the glycosyltransferase 28 family. MurG subfamily.

It is found in the cell inner membrane. It catalyses the reaction di-trans,octa-cis-undecaprenyl diphospho-N-acetyl-alpha-D-muramoyl-L-alanyl-D-glutamyl-meso-2,6-diaminopimeloyl-D-alanyl-D-alanine + UDP-N-acetyl-alpha-D-glucosamine = di-trans,octa-cis-undecaprenyl diphospho-[N-acetyl-alpha-D-glucosaminyl-(1-&gt;4)]-N-acetyl-alpha-D-muramoyl-L-alanyl-D-glutamyl-meso-2,6-diaminopimeloyl-D-alanyl-D-alanine + UDP + H(+). It participates in cell wall biogenesis; peptidoglycan biosynthesis. In terms of biological role, cell wall formation. Catalyzes the transfer of a GlcNAc subunit on undecaprenyl-pyrophosphoryl-MurNAc-pentapeptide (lipid intermediate I) to form undecaprenyl-pyrophosphoryl-MurNAc-(pentapeptide)GlcNAc (lipid intermediate II). This is UDP-N-acetylglucosamine--N-acetylmuramyl-(pentapeptide) pyrophosphoryl-undecaprenol N-acetylglucosamine transferase from Wolinella succinogenes (strain ATCC 29543 / DSM 1740 / CCUG 13145 / JCM 31913 / LMG 7466 / NCTC 11488 / FDC 602W) (Vibrio succinogenes).